The sequence spans 217 residues: Small ribosomal subunit protein uS3 (217 aa).

Positions 40–110 (IRDLINKWFN…EVYINIHEVR (71 aa)) constitute a KH type-2 domain.

This sequence belongs to the universal ribosomal protein uS3 family. In terms of assembly, part of the 30S ribosomal subunit. Forms a tight complex with proteins S10 and S14.

Binds the lower part of the 30S subunit head. Binds mRNA in the 70S ribosome, positioning it for translation. This chain is Small ribosomal subunit protein uS3, found in Rickettsia prowazekii (strain Madrid E).